Here is a 215-residue protein sequence, read N- to C-terminus: Proapoptotic nucleolar protein 1 (215 aa).

Residues 35–215 (RKGTPTARCL…RLPAPRSAST (181 aa)) form a disordered region. Residues 169–180 (PRPPQHLSPPQP) show a composition bias toward pro residues. The segment at 185–215 (MGAAEGSRRADTHHARRRRRARLPAPRSAST) is necessary for nucleolar localization.

As to expression, widely expressed.

The protein resides in the nucleus. Its subcellular location is the nucleolus. In terms of biological role, apoptosis-inducing protein that modulates the tumor suppressor function of CDKN2A/p14ARF. Enhances the stability of CDKN2A/p14ARF protein by protecting it from degradation. May act as a tumor suppressor. This is Proapoptotic nucleolar protein 1 from Homo sapiens (Human).